Consider the following 658-residue polypeptide: Glycogen debranching enzyme (658 aa).

The Nucleophile role is filled by aspartate 336. Residue glutamate 371 is the Proton donor of the active site.

Belongs to the glycosyl hydrolase 13 family.

It carries out the reaction Hydrolysis of (1-&gt;6)-alpha-D-glucosidic linkages to branches with degrees of polymerization of three or four glucose residues in limit dextrin.. The protein operates within glycan degradation; glycogen degradation. Functionally, removes maltotriose and maltotetraose chains that are attached by 1,6-alpha-linkage to the limit dextrin main chain, generating a debranched limit dextrin. This chain is Glycogen debranching enzyme, found in Klebsiella pneumoniae (strain 342).